The primary structure comprises 337 residues: Large ribosomal subunit protein uL3 (337 aa).

The tract at residues M1–R26 is disordered.

It belongs to the universal ribosomal protein uL3 family. Part of the 50S ribosomal subunit. Forms a cluster with proteins L14 and L24e.

One of the primary rRNA binding proteins, it binds directly near the 3'-end of the 23S rRNA, where it nucleates assembly of the 50S subunit. This Methanosphaera stadtmanae (strain ATCC 43021 / DSM 3091 / JCM 11832 / MCB-3) protein is Large ribosomal subunit protein uL3.